A 157-amino-acid chain; its full sequence is Receptor activity-modifying protein 2 (157 aa).

An N-terminal signal peptide occupies residues 1–24 (MAARLRPLLALLALAALCPQETLA). Residues 25-125 (QPLPTTDTWK…EQPTLCDPPE (101 aa)) are Extracellular-facing. Intrachain disulfides connect C50-C81 and C66-C113. N-linked (GlcNAc...) asparagine glycosylation is found at N67 and N112. Residues 126–147 (DVLLAMIIAPICLIPFFVTLVV) form a helical membrane-spanning segment. The Cytoplasmic portion of the chain corresponds to 148-157 (WRSKGTELKT).

The protein belongs to the RAMP family. In terms of assembly, heterodimer of CALCRL and RAMP2; the interaction forms the receptor complex for adrenomedullin/ADM. Heterodimer of CALCR and RAMP2; interaction forms the AMYR2 receptor complex for calcitonin/CALC and amylin/IAPP.

The protein localises to the cell membrane. Its function is as follows. Accessory protein that interacts with and modulates the function of G-protein coupled receptors including calcitonin gene-related peptide type 1 receptor (CALCRL) and calcitonin receptor (CALCR). Required for the transport of CALCRL to the plasma membrane. Together with CALCRL, form a receptor complex for adrenomedullin/ADM. Together with CALCR, act as a receptor complex for calcitonin/CT/CALC. Together with CALCR, also act as a receptor complex for amylin/IAPP. The chain is Receptor activity-modifying protein 2 (RAMP2) from Cavia porcellus (Guinea pig).